Reading from the N-terminus, the 480-residue chain is MKRRSIFMYYCFCFLLKYVAFSNVPNPNTTIGHFEICEVNTSSGDAEECVLENEFGKMFLFICDIDYNEMSKNIVLPSECAKKTYIDHVNPNGTSPEVNTYDIFPDLIAANESQFRDKFYFYGTPYSSKDIDFICLCFSETKPDIKHVMKMSFKKMTKKIKGCDFGDNIPTKKDLTNGKALYENSSCHIYAYPGDVIGINCYKKDINNIYNNNLELQPNNCFHNVYYEDDILLSSKNLIPNSRVIPDPSNDVKLSKMHSYMSYIILPDEINENVKISCACKRDEYIGTMFLYVNTSKNILTSPDNNVEEIAPLNDHYISIGDMWDMGLHENPEQIQGIISNHANKKYYEHMKIYKSNKMDSSDDDESNETESSENESNERTHNGNRANKDANNSEKMTGNRRKKNNSINNTNYYSNYEDDNGINISTHDKYYEDQHFGNNGPLRKKRTFWQNMFGTSSSYYEVFNYFSIAFILIIHMLLL.

Residues 1–22 (MKRRSIFMYYCFCFLLKYVAFS) form the signal peptide. 6-Cys domains lie at 23 to 156 (NVPN…FKKM) and 159 to 298 (KIKG…TSKN). Residues Asn28, Asn40, Asn92, Asn111, and Asn184 are each glycosylated (N-linked (GlcNAc...) asparagine). Disulfide bonds link Cys37–Cys49, Cys63–Cys137, Cys80–Cys135, Cys163–Cys187, Cys201–Cys280, and Cys221–Cys278. Asn294, Asn368, Asn375, Asn392, Asn405, Asn409, and Asn424 each carry an N-linked (GlcNAc...) asparagine glycan. Positions 358–415 (KMDSSDDDESNETESSENESNERTHNGNRANKDANNSEKMTGNRRKKNNSINNTNYYS) are disordered. The span at 362–376 (SDDDESNETESSENE) shows a compositional bias: acidic residues. The span at 377 to 393 (SNERTHNGNRANKDANN) shows a compositional bias: basic and acidic residues. Residues 406–415 (NSINNTNYYS) show a composition bias toward low complexity. Ser457 carries GPI-anchor amidated serine lipidation. Residues 458–480 (SSYYEVFNYFSIAFILIIHMLLL) constitute a propeptide, removed in mature form.

It localises to the cell surface. The protein resides in the cell membrane. Its function is as follows. Involved in sporozoite infection of hepatocytes and replication therein. This chain is Sporozoite surface protein P36p (P52), found in Plasmodium yoelii yoelii.